We begin with the raw amino-acid sequence, 528 residues long: Ribonuclease Y (528 aa).

Residues 15 to 35 form a helical membrane-spanning segment; the sequence is SLFFLALICGSIIGYFLYSFF. The 61-residue stretch at 217-277 folds into the KH domain; it reads NISVVNIPNE…IRREIAKKTL (61 aa). Positions 343–436 constitute an HD domain; that stretch reads VLKHSLEVAF…VAIADTLSSA (94 aa).

The protein belongs to the RNase Y family.

It localises to the cell membrane. Endoribonuclease that initiates mRNA decay. In Aster yellows witches'-broom phytoplasma (strain AYWB), this protein is Ribonuclease Y.